The following is a 221-amino-acid chain: Prolactin-3B1 (221 aa).

The signal sequence occupies residues 1-30 (MQLPLTPLSFSGTLLLMAMSNFLLWEHVTS). Cystine bridges form between Cys81–Cys196 and Cys213–Cys221.

Belongs to the somatotropin/prolactin family.

Its subcellular location is the secreted. The chain is Prolactin-3B1 (PRL3B1) from Mesocricetus auratus (Golden hamster).